The sequence spans 237 residues: 7-cyano-7-deazaguanine synthase (237 aa).

Residue 9–19 coordinates ATP; sequence YSGGLDSTTCL. Residues C189, C199, C202, and C205 each contribute to the Zn(2+) site.

Belongs to the QueC family. Zn(2+) serves as cofactor.

It catalyses the reaction 7-carboxy-7-deazaguanine + NH4(+) + ATP = 7-cyano-7-deazaguanine + ADP + phosphate + H2O + H(+). Its pathway is purine metabolism; 7-cyano-7-deazaguanine biosynthesis. Catalyzes the ATP-dependent conversion of 7-carboxy-7-deazaguanine (CDG) to 7-cyano-7-deazaguanine (preQ(0)). This chain is 7-cyano-7-deazaguanine synthase, found in Geobacter metallireducens (strain ATCC 53774 / DSM 7210 / GS-15).